The chain runs to 401 residues: Glyceraldehyde-3-phosphate dehydrogenase A, chloroplastic (401 aa).

Residues 1-65 constitute a chloroplast transit peptide; it reads MASNMLSIAN…RSSQNGVVEA (65 aa). Residues 76–77, D100, and R145 contribute to the NADP(+) site; that span reads RI. Residues 217-219, T248, R263, 276-277, and R299 contribute to the D-glyceraldehyde 3-phosphate site; these read SCT and TG. C218 serves as the catalytic Nucleophile. Residue N381 participates in NADP(+) binding.

Belongs to the glyceraldehyde-3-phosphate dehydrogenase family. Tetramer of either four A chains (GAPDH 2) or two A and two B chains (GAPDH 1).

The protein localises to the plastid. It is found in the chloroplast. It carries out the reaction D-glyceraldehyde 3-phosphate + phosphate + NADP(+) = (2R)-3-phospho-glyceroyl phosphate + NADPH + H(+). The protein operates within carbohydrate biosynthesis; Calvin cycle. This is Glyceraldehyde-3-phosphate dehydrogenase A, chloroplastic (GAPA) from Spinacia oleracea (Spinach).